Here is a 177-residue protein sequence, read N- to C-terminus: Large ribosomal subunit protein uL6 (177 aa).

The protein belongs to the universal ribosomal protein uL6 family. Part of the 50S ribosomal subunit.

This protein binds to the 23S rRNA, and is important in its secondary structure. It is located near the subunit interface in the base of the L7/L12 stalk, and near the tRNA binding site of the peptidyltransferase center. This Cupriavidus necator (strain ATCC 17699 / DSM 428 / KCTC 22496 / NCIMB 10442 / H16 / Stanier 337) (Ralstonia eutropha) protein is Large ribosomal subunit protein uL6.